The primary structure comprises 297 residues: Tyrosine recombinase XerD (297 aa).

The Core-binding (CB) domain occupies 1–86; that stretch reads MKDSALIELF…AMRKLFQYLY (86 aa). A Tyr recombinase domain is found at 107 to 291; sequence RLPKYLTEQQ…AKERLKHLHE (185 aa). Active-site residues include arginine 147, lysine 171, histidine 243, arginine 246, and histidine 269. Tyrosine 278 acts as the O-(3'-phospho-DNA)-tyrosine intermediate in catalysis.

It belongs to the 'phage' integrase family. XerD subfamily. In terms of assembly, forms a cyclic heterotetrameric complex composed of two molecules of XerC and two molecules of XerD.

It localises to the cytoplasm. Functionally, site-specific tyrosine recombinase, which acts by catalyzing the cutting and rejoining of the recombining DNA molecules. The XerC-XerD complex is essential to convert dimers of the bacterial chromosome into monomers to permit their segregation at cell division. It also contributes to the segregational stability of plasmids. The chain is Tyrosine recombinase XerD from Pasteurella multocida (strain Pm70).